A 350-amino-acid chain; its full sequence is S-adenosylmethionine:tRNA ribosyltransferase-isomerase (350 aa).

It belongs to the QueA family. In terms of assembly, monomer.

The protein localises to the cytoplasm. It catalyses the reaction 7-aminomethyl-7-carbaguanosine(34) in tRNA + S-adenosyl-L-methionine = epoxyqueuosine(34) in tRNA + adenine + L-methionine + 2 H(+). Its pathway is tRNA modification; tRNA-queuosine biosynthesis. Its function is as follows. Transfers and isomerizes the ribose moiety from AdoMet to the 7-aminomethyl group of 7-deazaguanine (preQ1-tRNA) to give epoxyqueuosine (oQ-tRNA). In Aliivibrio salmonicida (strain LFI1238) (Vibrio salmonicida (strain LFI1238)), this protein is S-adenosylmethionine:tRNA ribosyltransferase-isomerase.